The primary structure comprises 891 residues: Microtubule-associated protein 10 (891 aa).

4 disordered regions span residues 325–355 (AAVQ…PPQI), 401–457 (EDKG…VTKG), 504–679 (SWKG…KSSC), and 702–844 (TTEN…SNLS). Over residues 407-417 (PSTKSTSPSES) the composition is skewed to low complexity. Composition is skewed to polar residues over residues 509 to 520 (VSSSAAESQMSP) and 527 to 544 (PTDS…SQLP). Basic and acidic residues-rich tracts occupy residues 577–592 (STTK…KQEM) and 645–658 (TVDK…DGRQ). Polar residues-rich tracts occupy residues 665 to 679 (ADTS…KSSC), 702 to 718 (TTEN…SSTG), 726 to 749 (SRAS…SSVL), 776 to 790 (EASS…SQWT), and 826 to 844 (KSQS…SNLS).

As to quaternary structure, interacts (via middle region) with microtubules.

The protein resides in the cytoplasm. The protein localises to the cytoskeleton. It localises to the spindle pole. Its subcellular location is the microtubule organizing center. It is found in the centrosome. The protein resides in the midbody. Its function is as follows. Microtubule-associated protein (MAP) that plays a role in the regulation of cell division; promotes microtubule stability and participates in the organization of the spindle midzone and normal progress of cytokinesis. This chain is Microtubule-associated protein 10 (Map10), found in Mus musculus (Mouse).